The following is a 768-amino-acid chain: Transferrin receptor protein 1 (768 aa).

Over 1–68 the chain is Cytoplasmic; the sequence is MMDQARSAFS…VAKPKRLNGY (68 aa). Positions 1-70 are mediates interaction with SH3BP4; it reads MMDQARSAFS…KPKRLNGYVC (70 aa). Phosphoserine is present on residues serine 10 and serine 19. Tyrosine 20 is subject to Phosphotyrosine. Residues 20–23 carry the Endocytosis signal motif; that stretch reads YTRF. Threonine 21 carries the post-translational modification Phosphothreonine. Serine 24 is modified (phosphoserine). Positions 61–64 match the Stop-transfer sequence motif; sequence KPKR. A helical transmembrane segment spans residues 69–89; it reads VCYGIIAVITFFLIGFMIGYL. Cysteine 70 carries S-palmitoyl cysteine lipidation. Residues 90–768 are Extracellular-facing; it reads AYCKRVESKT…GDIWDIDNEF (679 aa). Positions 231–321 constitute a PA domain; that stretch reads SKATTVTGKL…GTGDPYTPGF (91 aa). Asparagine 259 and asparagine 325 each carry an N-linked (GlcNAc...) asparagine glycan. Residues 577–768 are ligand-binding; that stretch reads TMDTYDVLSK…GDIWDIDNEF (192 aa). Residues 654–656 carry the Cell attachment site motif; the sequence is RGD. N-linked (GlcNAc...) asparagine glycans are attached at residues asparagine 730 and asparagine 735.

The protein belongs to the peptidase M28 family. M28B subfamily. Homodimer; disulfide-linked. Binds one transferrin or HFE molecule per subunit. Interacts with SH3BP4. Interacts with SH3BP3. Interacts with STEAP3; facilitates TFRC endocytosis in erythroid precursor cells. In terms of processing, stearoylated by ZDHHC6 which inhibits TFRC-mediated activation of the JNK pathway and promotes mitochondrial fragmentation. Stearoylation does not affect iron uptake.

It is found in the cell membrane. Its subcellular location is the melanosome. Functionally, cellular uptake of iron occurs via receptor-mediated endocytosis of ligand-occupied transferrin receptor into specialized endosomes. Endosomal acidification leads to iron release. The apotransferrin-receptor complex is then recycled to the cell surface with a return to neutral pH and the concomitant loss of affinity of apotransferrin for its receptor. Transferrin receptor is necessary for development of erythrocytes and the nervous system. Positively regulates T and B cell proliferation through iron uptake. Acts as a lipid sensor that regulates mitochondrial fusion by regulating activation of the JNK pathway. When dietary levels of stearate (C18:0) are low, promotes activation of the JNK pathway, resulting in HUWE1-mediated ubiquitination and subsequent degradation of the mitofusin MFN2 and inhibition of mitochondrial fusion. When dietary levels of stearate (C18:0) are high, TFRC stearoylation inhibits activation of the JNK pathway and thus degradation of the mitofusin MFN2. Mediates uptake of NICOL1 into fibroblasts where it may regulate extracellular matrix production. The polypeptide is Transferrin receptor protein 1 (TFRC) (Sus scrofa (Pig)).